The primary structure comprises 228 residues: Leucyl/phenylalanyl-tRNA--protein transferase (228 aa).

Belongs to the L/F-transferase family.

The protein localises to the cytoplasm. It carries out the reaction N-terminal L-lysyl-[protein] + L-leucyl-tRNA(Leu) = N-terminal L-leucyl-L-lysyl-[protein] + tRNA(Leu) + H(+). It catalyses the reaction N-terminal L-arginyl-[protein] + L-leucyl-tRNA(Leu) = N-terminal L-leucyl-L-arginyl-[protein] + tRNA(Leu) + H(+). The catalysed reaction is L-phenylalanyl-tRNA(Phe) + an N-terminal L-alpha-aminoacyl-[protein] = an N-terminal L-phenylalanyl-L-alpha-aminoacyl-[protein] + tRNA(Phe). Functions in the N-end rule pathway of protein degradation where it conjugates Leu, Phe and, less efficiently, Met from aminoacyl-tRNAs to the N-termini of proteins containing an N-terminal arginine or lysine. The sequence is that of Leucyl/phenylalanyl-tRNA--protein transferase from Thiobacillus denitrificans (strain ATCC 25259 / T1).